The chain runs to 885 residues: MRAIIKFKWAIAAIVLALTVVLSLFSPNLTELANQKGQAQLPADAVSERANAILKQAGEDNNSISVVFTLDNAIKKETENQLRIIIDKIKKIDGVEEVTSPLSAEKEVKDQLMSKDKKTVLMPVTITGSDKKAEKIADEIYQIVPDDLTAYITGASLINQDFAHSSEEGLKKTEVITVCLIIGLLLIVFRSVVTPFIPIVVVGFSYLISQSILGILVYNVDFPISTFTQTFLVAILFGIGTDYCILLLTRFREELANGHDKKEAALIAYRTGGKTLFISGFAVLIGFSALGFAKFAIFQSAVGVAVGVGILMIILYTLLPLFMVTLGEKLFWPSKKVLSHSDNKLWAFLGRHSVARPFLFIVITVVITLPFILTYDDQISFDSTAEISSDYKSIKALEAIKDGFGEGKAFPINVVVKGDKDLTTADTIPYLGNISKAIEKVDHVDSVMTITQPTGKKIKDLYIDNQLGSVSDGLDKTVKGIADVQSGLTDIENGLNQMAGQTGSASNGGSGGSLGDAADGLGKINQQLQLVSKQISQTGNTAQTVQQLTAISGQLGQIQTGLEQANQQLSGQQAQAGTLTESLKKLSEGVKSANEGLTKVSDGITASSDILEDMSKSPTVRDTGIFIPDQVMKDKDFKKSIDQYSFADGKGVQLSVVLDSNPYSEQAITTINQIKKAVANEVDGTPLENAQIVYGGVTSMNADLKELSTTDFSRTMVIMIIGLFIVLTILFRSMIMPIYMIASLLLTYYTSISITELIFVNGLGNAGVSWAVPFFSFVILIALGVDYSIFLLDRFKEEVHLGIEQGVVRSMSKMGSVIITAAIILAGTFAAMMPSGVNTLMQVASVIIIGLLLYGLVILPLFIPAIIATFGEGNWWPFGRKKGKE.

The next 7 membrane-spanning stretches (helical) occupy residues 9 to 29 (WAIA…SPNL), 181 to 201 (IIGL…PIVV), 202 to 222 (VGFS…NVDF), 227 to 247 (FTQT…CILL), 278 to 298 (ISGF…FAIF), 304 to 324 (VAVG…LFMV), and 354 to 374 (VARP…FILT). The interval 498–518 (MAGQTGSASNGGSGGSLGDAA) is disordered. The next 5 membrane-spanning stretches (helical) occupy residues 716–736 (MVIM…SMIM), 740–760 (MIAS…LIFV), 772–792 (VPFF…IFLL), 817–837 (VIIT…PSGV), and 847–867 (IIIG…PAII).

Belongs to the resistance-nodulation-cell division (RND) (TC 2.A.6) family. MmpL subfamily.

It is found in the cell membrane. The sequence is that of Putative membrane protein YdgH (ydgH) from Bacillus subtilis (strain 168).